The primary structure comprises 331 residues: Carbonic anhydrase-related protein 11 (331 aa).

The first 23 residues, 1–23 (MGGAARLSAPRALVLWAVLGAAA), serve as a signal peptide directing secretion. Residues 33–306 (DWWSYKDNLQ…LAHRALRGNR (274 aa)) form the Alpha-carbonic anhydrase domain. Residues Asn-118, Asn-170, Asn-189, and Asn-263 are each glycosylated (N-linked (GlcNAc...) asparagine). Positions 303–331 (RGNRDPRHPERRCRGPNYRLHVDGAPHGR) are disordered. Positions 322-331 (LHVDGAPHGR) are enriched in basic and acidic residues.

This sequence belongs to the alpha-carbonic anhydrase family.

The protein resides in the secreted. Functionally, does not have a catalytic activity. The polypeptide is Carbonic anhydrase-related protein 11 (CA11) (Sus scrofa (Pig)).